Reading from the N-terminus, the 443-residue chain is Chromosome partition protein MukF (443 aa).

The leucine-zipper stretch occupies residues 209-237 (LDETSINLRELQDTLNAAGDKLQSQLLRI).

It belongs to the MukF family. In terms of assembly, interacts, and probably forms a ternary complex, with MukE and MukB via its C-terminal region. The complex formation is stimulated by calcium or magnesium. It is required for an interaction between MukE and MukB.

Its subcellular location is the cytoplasm. The protein resides in the nucleoid. Its function is as follows. Involved in chromosome condensation, segregation and cell cycle progression. May participate in facilitating chromosome segregation by condensation DNA from both sides of a centrally located replisome during cell division. Not required for mini-F plasmid partitioning. Probably acts via its interaction with MukB and MukE. Overexpression results in anucleate cells. It has a calcium binding activity. The chain is Chromosome partition protein MukF from Haemophilus ducreyi (strain 35000HP / ATCC 700724).